A 239-amino-acid chain; its full sequence is 1-(5-phosphoribosyl)-5-[(5-phosphoribosylamino)methylideneamino] imidazole-4-carboxamide isomerase (239 aa).

D12 functions as the Proton acceptor in the catalytic mechanism. D132 serves as the catalytic Proton donor.

Belongs to the HisA/HisF family.

The protein localises to the cytoplasm. It carries out the reaction 1-(5-phospho-beta-D-ribosyl)-5-[(5-phospho-beta-D-ribosylamino)methylideneamino]imidazole-4-carboxamide = 5-[(5-phospho-1-deoxy-D-ribulos-1-ylimino)methylamino]-1-(5-phospho-beta-D-ribosyl)imidazole-4-carboxamide. It participates in amino-acid biosynthesis; L-histidine biosynthesis; L-histidine from 5-phospho-alpha-D-ribose 1-diphosphate: step 4/9. The protein is 1-(5-phosphoribosyl)-5-[(5-phosphoribosylamino)methylideneamino] imidazole-4-carboxamide isomerase of Natronomonas pharaonis (strain ATCC 35678 / DSM 2160 / CIP 103997 / JCM 8858 / NBRC 14720 / NCIMB 2260 / Gabara) (Halobacterium pharaonis).